A 192-amino-acid chain; its full sequence is Peptidyl-tRNA hydrolase (192 aa).

Tyr-18 contacts tRNA. His-23 (proton acceptor) is an active-site residue. Residues Phe-69, Asn-71, and Asn-117 each contribute to the tRNA site.

Belongs to the PTH family. Monomer.

It is found in the cytoplasm. The catalysed reaction is an N-acyl-L-alpha-aminoacyl-tRNA + H2O = an N-acyl-L-amino acid + a tRNA + H(+). Its function is as follows. Hydrolyzes ribosome-free peptidyl-tRNAs (with 1 or more amino acids incorporated), which drop off the ribosome during protein synthesis, or as a result of ribosome stalling. In terms of biological role, catalyzes the release of premature peptidyl moieties from peptidyl-tRNA molecules trapped in stalled 50S ribosomal subunits, and thus maintains levels of free tRNAs and 50S ribosomes. The chain is Peptidyl-tRNA hydrolase from Neisseria meningitidis serogroup B (strain ATCC BAA-335 / MC58).